A 272-amino-acid chain; its full sequence is GATA zinc finger domain-containing protein 1 (272 aa).

A GATA-type zinc finger spans residues 9 to 33 (CSVCKTTSSSMWKKGPQGEILCHHC). Residues 67–120 (TFASTSAAPPQSNGGGGGKQSKQEIHRRSARLRNTKYKSAPAAEKKVSTKGKGR) are disordered. The residue at position 167 (lysine 167) is an N6-acetyllysine. Residue lysine 265 forms a Glycyl lysine isopeptide (Lys-Gly) (interchain with G-Cter in SUMO2) linkage.

The protein resides in the nucleus. The chain is GATA zinc finger domain-containing protein 1 (GATAD1) from Bos taurus (Bovine).